Consider the following 631-residue polypeptide: 1-deoxy-D-xylulose-5-phosphate synthase (631 aa).

Residues histidine 87 and 128–130 (GHS) contribute to the thiamine diphosphate site. A Mg(2+)-binding site is contributed by aspartate 159. Thiamine diphosphate-binding positions include 160-161 (GA), asparagine 188, phenylalanine 295, and glutamate 377. Asparagine 188 lines the Mg(2+) pocket.

Belongs to the transketolase family. DXPS subfamily. As to quaternary structure, homodimer. Mg(2+) is required as a cofactor. Thiamine diphosphate serves as cofactor.

It carries out the reaction D-glyceraldehyde 3-phosphate + pyruvate + H(+) = 1-deoxy-D-xylulose 5-phosphate + CO2. Its pathway is metabolic intermediate biosynthesis; 1-deoxy-D-xylulose 5-phosphate biosynthesis; 1-deoxy-D-xylulose 5-phosphate from D-glyceraldehyde 3-phosphate and pyruvate: step 1/1. Functionally, catalyzes the acyloin condensation reaction between C atoms 2 and 3 of pyruvate and glyceraldehyde 3-phosphate to yield 1-deoxy-D-xylulose-5-phosphate (DXP). This is 1-deoxy-D-xylulose-5-phosphate synthase from Pseudomonas putida (strain ATCC 700007 / DSM 6899 / JCM 31910 / BCRC 17059 / LMG 24140 / F1).